The sequence spans 259 residues: Aminoglycoside 3'-phosphotransferase (259 aa).

Asp-187 functions as the Proton acceptor in the catalytic mechanism.

Belongs to the aminoglycoside phosphotransferase family.

The catalysed reaction is kanamycin A + ATP = kanamycin 3'-phosphate + ADP + H(+). Its function is as follows. Resistance to kanamycin and structurally-related aminoglycosides, including amikacin. This Acinetobacter baumannii protein is Aminoglycoside 3'-phosphotransferase (aphA-6).